A 429-amino-acid polypeptide reads, in one-letter code: UDP-N-acetylglucosamine 1-carboxyvinyltransferase 2 (429 aa).

22-23 (KN) is a phosphoenolpyruvate binding site. A UDP-N-acetyl-alpha-D-glucosamine-binding site is contributed by Arg-93. Residue Cys-117 is the Proton donor of the active site. Cys-117 carries the 2-(S-cysteinyl)pyruvic acid O-phosphothioketal modification. UDP-N-acetyl-alpha-D-glucosamine contacts are provided by residues 122–126 (RPIDQ), Asp-305, and Ile-327.

The protein belongs to the EPSP synthase family. MurA subfamily.

The protein localises to the cytoplasm. It carries out the reaction phosphoenolpyruvate + UDP-N-acetyl-alpha-D-glucosamine = UDP-N-acetyl-3-O-(1-carboxyvinyl)-alpha-D-glucosamine + phosphate. The protein operates within cell wall biogenesis; peptidoglycan biosynthesis. Cell wall formation. Adds enolpyruvyl to UDP-N-acetylglucosamine. The chain is UDP-N-acetylglucosamine 1-carboxyvinyltransferase 2 from Bacillus cereus (strain ATCC 14579 / DSM 31 / CCUG 7414 / JCM 2152 / NBRC 15305 / NCIMB 9373 / NCTC 2599 / NRRL B-3711).